A 214-amino-acid chain; its full sequence is Acyl-homoserine-lactone synthase (214 aa).

It belongs to the autoinducer synthase family.

The catalysed reaction is a fatty acyl-[ACP] + S-adenosyl-L-methionine = an N-acyl-L-homoserine lactone + S-methyl-5'-thioadenosine + holo-[ACP] + H(+). In terms of biological role, required for the synthesis of autoinducer molecules such as OHHL (N-(3-oxohexanoyl)-L-homoserine lactone), and HHL (N-hexanoyl-L-homoserine lactone). This is Acyl-homoserine-lactone synthase (yenI) from Yersinia enterocolitica.